We begin with the raw amino-acid sequence, 131 residues long: Small ribosomal subunit protein bS16 (131 aa).

Basic and acidic residues predominate over residues 87-117 (IGKSKQEELRKSEAKTSAKNKKANEEKANEE). A disordered region spans residues 87–131 (IGKSKQEELRKSEAKTSAKNKKANEEKANEEKVEESETLEASSEA).

Belongs to the bacterial ribosomal protein bS16 family.

The protein is Small ribosomal subunit protein bS16 of Prochlorococcus marinus (strain SARG / CCMP1375 / SS120).